Consider the following 63-residue polypeptide: AQIDCDKECNRRCSKASAHDRCLKYCGICCEKCHCVPPGTAGNEDVCPCYANLKNSKGGHKCP.

The protein belongs to the GASA family. In terms of tissue distribution, expressed in pollen (at protein level).

The protein is Cypmaclein of Cupressus sempervirens (Italian cypress).